The primary structure comprises 391 residues: Elongation factor Tu (391 aa).

Residues lysine 10–glutamate 201 enclose the tr-type G domain. A G1 region spans residues glycine 19–threonine 26. A GTP-binding site is contributed by glycine 19 to threonine 26. A Mg(2+)-binding site is contributed by threonine 26. The tract at residues glycine 55 to serine 59 is G2. The G3 stretch occupies residues aspartate 76–glycine 79. GTP-binding positions include aspartate 76–histidine 80 and asparagine 131–aspartate 134. The interval asparagine 131 to aspartate 134 is G4. The interval serine 169–leucine 171 is G5.

It belongs to the TRAFAC class translation factor GTPase superfamily. Classic translation factor GTPase family. EF-Tu/EF-1A subfamily. Monomer.

The protein resides in the cytoplasm. The enzyme catalyses GTP + H2O = GDP + phosphate + H(+). GTP hydrolase that promotes the GTP-dependent binding of aminoacyl-tRNA to the A-site of ribosomes during protein biosynthesis. The sequence is that of Elongation factor Tu from Rhizobium meliloti (strain 1021) (Ensifer meliloti).